The sequence spans 291 residues: Bifunctional protein FolD (291 aa).

NADP(+) is bound by residues 171-173 and I239; that span reads GVS.

It belongs to the tetrahydrofolate dehydrogenase/cyclohydrolase family. Homodimer.

The catalysed reaction is (6R)-5,10-methylene-5,6,7,8-tetrahydrofolate + NADP(+) = (6R)-5,10-methenyltetrahydrofolate + NADPH. It catalyses the reaction (6R)-5,10-methenyltetrahydrofolate + H2O = (6R)-10-formyltetrahydrofolate + H(+). Its pathway is one-carbon metabolism; tetrahydrofolate interconversion. Catalyzes the oxidation of 5,10-methylenetetrahydrofolate to 5,10-methenyltetrahydrofolate and then the hydrolysis of 5,10-methenyltetrahydrofolate to 10-formyltetrahydrofolate. The protein is Bifunctional protein FolD of Xylella fastidiosa (strain Temecula1 / ATCC 700964).